The sequence spans 210 residues: Uracil phosphoribosyltransferase (210 aa).

Residues Arg-78, Arg-103, and 130-138 (DPMLATGGT) contribute to the 5-phospho-alpha-D-ribose 1-diphosphate site. Residues Ile-193 and 198–200 (GDA) each bind uracil. Asp-199 provides a ligand contact to 5-phospho-alpha-D-ribose 1-diphosphate.

This sequence belongs to the UPRTase family. It depends on Mg(2+) as a cofactor.

The catalysed reaction is UMP + diphosphate = 5-phospho-alpha-D-ribose 1-diphosphate + uracil. It functions in the pathway pyrimidine metabolism; UMP biosynthesis via salvage pathway; UMP from uracil: step 1/1. With respect to regulation, allosterically activated by GTP. Catalyzes the conversion of uracil and 5-phospho-alpha-D-ribose 1-diphosphate (PRPP) to UMP and diphosphate. This chain is Uracil phosphoribosyltransferase, found in Xanthomonas axonopodis pv. citri (strain 306).